The following is a 345-amino-acid chain: L-threonine 3-dehydrogenase (345 aa).

Cys42 is a Zn(2+) binding site. Active-site charge relay system residues include Thr44 and His47. Zn(2+) contacts are provided by His67, Glu68, Cys97, Cys100, Cys103, and Cys111. Residues Ile179, Asp199, Arg204, 266–268, and 290–291 contribute to the NAD(+) site; these read LGI and IY.

Belongs to the zinc-containing alcohol dehydrogenase family. As to quaternary structure, homotetramer. Zn(2+) is required as a cofactor.

Its subcellular location is the cytoplasm. The enzyme catalyses L-threonine + NAD(+) = (2S)-2-amino-3-oxobutanoate + NADH + H(+). The protein operates within amino-acid degradation; L-threonine degradation via oxydo-reductase pathway; glycine from L-threonine: step 1/2. Functionally, catalyzes the NAD(+)-dependent oxidation of L-threonine to 2-amino-3-ketobutyrate. The sequence is that of L-threonine 3-dehydrogenase from Rhizobium etli (strain ATCC 51251 / DSM 11541 / JCM 21823 / NBRC 15573 / CFN 42).